A 160-amino-acid chain; its full sequence is CXXC motif containing zinc binding protein (160 aa).

Cysteine 33, cysteine 36, cysteine 67, and cysteine 70 together coordinate Zn(2+). Serine 75 carries the post-translational modification Phosphoserine.

Belongs to the UPF0587 family. As to quaternary structure, monomer.

The protein is CXXC motif containing zinc binding protein of Homo sapiens (Human).